The sequence spans 564 residues: Probable metalloprotease ARX1 (564 aa).

Belongs to the peptidase M24 family. In terms of assembly, component of the nucleoplasmic and cytoplasmic pre-60S ribosomal particles.

It localises to the cytoplasm. It is found in the nucleus. In terms of biological role, probable metalloprotease involved in proper assembly of pre-ribosomal particles during the biogenesis of the 60S ribosomal subunit. Accompanies the pre-60S particles to the cytoplasm. The sequence is that of Probable metalloprotease ARX1 (ARX1) from Debaryomyces hansenii (strain ATCC 36239 / CBS 767 / BCRC 21394 / JCM 1990 / NBRC 0083 / IGC 2968) (Yeast).